Consider the following 189-residue polypeptide: Prophage DNA-packing protein NohA (189 aa).

The protein belongs to the terminase small subunit family.

In Escherichia coli (strain K12), this protein is Prophage DNA-packing protein NohA (nohA).